A 471-amino-acid chain; its full sequence is Collagenase 3 (471 aa).

Residues 1-19 form the signal peptide; it reads MQPGVLAACLLLSWTHCWS. Positions 20–103 are cleaved as a propeptide — activation peptide; sequence LPLLNSNEDD…PRCGVPDVGE (84 aa). The Cysteine switch signature appears at 94–101; it reads PRCGVPDV. Position 96 (cysteine 96) interacts with Zn(2+). An N-linked (GlcNAc...) asparagine glycan is attached at asparagine 117. Aspartate 128 lines the Ca(2+) pocket. N-linked (GlcNAc...) asparagine glycans are attached at residues asparagine 152 and asparagine 158. Ca(2+) is bound at residue aspartate 162. Positions 172 and 174 each coordinate Zn(2+). Residues 176 to 246 form an interaction with TIMP2 region; sequence YPFDGPSGLL…GALMFPIYTY (71 aa). Residues aspartate 179, glycine 180, serine 182, and leucine 184 each contribute to the Ca(2+) site. Histidine 187 contacts Zn(2+). The Ca(2+) site is built by asparagine 194, glycine 196, and aspartate 198. Histidine 200 is a Zn(2+) binding site. Ca(2+) is bound by residues aspartate 202, aspartate 203, and glutamate 205. Position 222 (histidine 222) interacts with Zn(2+). The active site involves glutamate 223. Residues histidine 226, histidine 232, and methionine 240 each contribute to the Zn(2+) site. A disordered region spans residues 263–284; it reads QSLYGPGDEDPNPKHPKTPDKC. The tract at residues 268–471 is interaction with collagen; sequence PGDEDPNPKH…VMPTNSLLWC (204 aa). Residues 273–284 are compositionally biased toward basic and acidic residues; that stretch reads PNPKHPKTPDKC. 4 Hemopexin repeats span residues 281-330, 331-377, 379-427, and 428-471; these read PDKC…WPEL, PNRI…GFPR, VKKI…FPGI, and GGKV…LLWC. Cysteine 284 and cysteine 471 are joined by a disulfide. Ca(2+)-binding residues include aspartate 291, isoleucine 293, aspartate 335, and alanine 337. Residue tyrosine 366 is modified to Phosphotyrosine; by PKDCC. Positions 383 and 385 each coordinate Ca(2+). Asparagine 409 carries N-linked (GlcNAc...) asparagine glycosylation. Residues aspartate 432 and valine 434 each contribute to the Ca(2+) site.

This sequence belongs to the peptidase M10A family. It depends on Ca(2+) as a cofactor. Zn(2+) serves as cofactor. The proenzyme is activated by removal of the propeptide; this cleavage can be effected by other matrix metalloproteinases, such as MMP2, MMP3 and MMP14 and may involve several cleavage steps. Cleavage can also be autocatalytic, after partial maturation by another protease or after treatment with 4-aminophenylmercuric acetate (APMA) (in vitro). In terms of processing, N-glycosylated. Post-translationally, tyrosine phosphorylated by PKDCC/VLK.

The protein localises to the secreted. The protein resides in the extracellular space. It is found in the extracellular matrix. In terms of biological role, plays a role in the degradation of extracellular matrix proteins including fibrillar collagen, fibronectin, TNC and ACAN. Cleaves triple helical collagens, including type I, type II and type III collagen, but has the highest activity with soluble type II collagen. Can also degrade collagen type IV, type XIV and type X. May also function by activating or degrading key regulatory proteins, such as TGFB1 and CCN2. Plays a role in wound healing, tissue remodeling, cartilage degradation, bone development, bone mineralization and ossification. Required for normal embryonic bone development and ossification. Plays a role in the healing of bone fractures via endochondral ossification. Plays a role in wound healing, probably by a mechanism that involves proteolytic activation of TGFB1 and degradation of CCN2. Plays a role in keratinocyte migration during wound healing. May play a role in cell migration and in tumor cell invasion. The protein is Collagenase 3 (MMP13) of Oryctolagus cuniculus (Rabbit).